Consider the following 183-residue polypeptide: UPF0398 protein BLi02355/BL05236 (183 aa).

It belongs to the UPF0398 family.

The sequence is that of UPF0398 protein BLi02355/BL05236 from Bacillus licheniformis (strain ATCC 14580 / DSM 13 / JCM 2505 / CCUG 7422 / NBRC 12200 / NCIMB 9375 / NCTC 10341 / NRRL NRS-1264 / Gibson 46).